An 860-amino-acid polypeptide reads, in one-letter code: Leucine--tRNA ligase (860 aa).

The short motif at 42–52 (PYPSGRLHMGH) is the 'HIGH' region element. A 'KMSKS' region motif is present at residues 619-623 (KMSKS). Lys-622 provides a ligand contact to ATP.

This sequence belongs to the class-I aminoacyl-tRNA synthetase family.

The protein localises to the cytoplasm. It carries out the reaction tRNA(Leu) + L-leucine + ATP = L-leucyl-tRNA(Leu) + AMP + diphosphate. This is Leucine--tRNA ligase from Escherichia coli (strain SMS-3-5 / SECEC).